The primary structure comprises 533 residues: Probable galacturonosyltransferase 13 (533 aa).

Residues 1 to 40 (MQLHISPSMRSITISSSNEFIDLMKIKVAARHISYRTLFH) lie on the Cytoplasmic side of the membrane. Residues 41–61 (TILILAFLLPFVFILTAVVTL) traverse the membrane as a helical; Signal-anchor for type II membrane protein segment. The Lumenal portion of the chain corresponds to 62–533 (EGVNKCSSFD…DFIKNCHILE (472 aa)). Asn-306, Asn-396, Asn-445, and Asn-520 each carry an N-linked (GlcNAc...) asparagine glycan.

The protein belongs to the glycosyltransferase 8 family. As to expression, expressed in roots, inflorescences, siliques, leaves and stems. Accumulates in pollen grains.

The protein localises to the golgi apparatus membrane. It functions in the pathway glycan metabolism; pectin biosynthesis. May be involved in pectin and/or xylans biosynthesis in cell walls. Together with GAUT14, required for pollen tube growth, possibly through the regulation of pectin biosynthesis and repartition in the pollen tube wall. The polypeptide is Probable galacturonosyltransferase 13 (Arabidopsis thaliana (Mouse-ear cress)).